The following is a 230-amino-acid chain: UPF0502 protein Oter_3715 (230 aa).

The protein belongs to the UPF0502 family.

This Opitutus terrae (strain DSM 11246 / JCM 15787 / PB90-1) protein is UPF0502 protein Oter_3715.